Consider the following 392-residue polypeptide: N-acetylneuraminate epimerase (392 aa).

Residues 1-35 (MTQIYHQYKKKLSTKVILLSALTLCITFSLPYANA) form the signal peptide. Kelch repeat units follow at residues 56–100 (HLYV…VALS), 102–155 (KLYV…TTLN), 157–192 (TQAL…AVVN), 193–238 (AYFD…TAKK), 241–290 (LILI…LAGA), 312–361 (QQFN…QDKD), and 363–392 (VILL…LHLE). Glu-247 serves as the catalytic Proton acceptor.

Belongs to the NanM family. As to quaternary structure, homodimer.

It is found in the periplasm. It carries out the reaction N-acetyl-alpha-neuraminate = N-acetyl-beta-neuraminate. Its function is as follows. Converts alpha-N-acetylneuranimic acid (Neu5Ac) to the beta-anomer, accelerating the equilibrium between the alpha- and beta-anomers. Probably facilitates sialidase-negative bacteria to compete successfully for limited amounts of extracellular Neu5Ac, which is likely taken up in the beta-anomer. In addition, the rapid removal of sialic acid from solution might be advantageous to the bacterium to damp down host responses. This Yersinia enterocolitica serotype O:8 / biotype 1B (strain NCTC 13174 / 8081) protein is N-acetylneuraminate epimerase.